Reading from the N-terminus, the 223-residue chain is Ribosome maturation factor RimM (223 aa).

The span at 1–12 (MARRPGSSSRGP) shows a compositional bias: low complexity. Disordered stretches follow at residues 1 to 44 (MARR…DPGL) and 204 to 223 (ADPPDDLFAPPGPKPADDPG). The 75-residue stretch at 136–210 (EDEFFLTDLI…KVVADPPDDL (75 aa)) folds into the PRC barrel domain.

Belongs to the RimM family. Binds ribosomal protein uS19.

Its subcellular location is the cytoplasm. In terms of biological role, an accessory protein needed during the final step in the assembly of 30S ribosomal subunit, possibly for assembly of the head region. Essential for efficient processing of 16S rRNA. May be needed both before and after RbfA during the maturation of 16S rRNA. It has affinity for free ribosomal 30S subunits but not for 70S ribosomes. The polypeptide is Ribosome maturation factor RimM (Methylorubrum extorquens (strain PA1) (Methylobacterium extorquens)).